The chain runs to 310 residues: Porphobilinogen deaminase (310 aa).

At Cys241 the chain carries S-(dipyrrolylmethanemethyl)cysteine.

It belongs to the HMBS family. In terms of assembly, monomer. Dipyrromethane is required as a cofactor.

It carries out the reaction 4 porphobilinogen + H2O = hydroxymethylbilane + 4 NH4(+). It functions in the pathway porphyrin-containing compound metabolism; protoporphyrin-IX biosynthesis; coproporphyrinogen-III from 5-aminolevulinate: step 2/4. Tetrapolymerization of the monopyrrole PBG into the hydroxymethylbilane pre-uroporphyrinogen in several discrete steps. In Lysinibacillus sphaericus (strain C3-41), this protein is Porphobilinogen deaminase.